The chain runs to 186 residues: Ribosome-recycling factor (186 aa).

The protein belongs to the RRF family.

The protein resides in the cytoplasm. Functionally, responsible for the release of ribosomes from messenger RNA at the termination of protein biosynthesis. May increase the efficiency of translation by recycling ribosomes from one round of translation to another. The protein is Ribosome-recycling factor of Albidiferax ferrireducens (strain ATCC BAA-621 / DSM 15236 / T118) (Rhodoferax ferrireducens).